A 452-amino-acid chain; its full sequence is Elongation factor Tu, mitochondrial (452 aa).

Residues 1–43 (MAAATLLRATPRFSGLCASPTPFLQGRLRPLKAPASPFLCRGL) constitute a mitochondrion transit peptide. The 197-residue stretch at 55–251 (KPHVNVGTIG…AVDTYIPVPT (197 aa)) folds into the tr-type G domain. A G1 region spans residues 64–71 (GHVDHGKT). Asp-67, Gly-69, Lys-70, Thr-71, and Thr-72 together coordinate GTP. Thr-71 is a binding site for Mg(2+). At Lys-79 the chain carries N6-acetyllysine. Position 88 is an N6-acetyllysine; alternate (Lys-88). The residue at position 88 (Lys-88) is an N6-succinyllysine; alternate. The segment at 105–109 (GITIN) is G2. Residues 126–129 (DCPG) are G3. The GTP site is built by Asn-181, Asp-184, Ser-219, Ala-220, and Leu-221. The tract at residues 181–184 (NKAD) is G4. The G5 stretch occupies residues 219–221 (SAL). N6-succinyllysine is present on Lys-234. Residue Lys-256 is modified to N6-acetyllysine. Position 278 is a phosphothreonine (Thr-278). Lys-286 bears the N6-succinyllysine mark. A Phosphoserine modification is found at Ser-312. 2 positions are modified to N6-acetyllysine: Lys-361 and Lys-418.

This sequence belongs to the TRAFAC class translation factor GTPase superfamily. Classic translation factor GTPase family. EF-Tu/EF-1A subfamily. As to quaternary structure, interacts with NLRX1. Interacts with ATG16L1.

The protein localises to the mitochondrion. The catalysed reaction is GTP + H2O = GDP + phosphate + H(+). Functionally, GTP hydrolase that promotes the GTP-dependent binding of aminoacyl-tRNA to the A-site of ribosomes during protein biosynthesis. Plays a role in the regulation of autophagy and innate immunity. Recruits ATG5-ATG12 and NLRX1 at mitochondria and serves as a checkpoint of the RIGI-MAVS pathway. In turn, inhibits RLR-mediated type I interferon while promoting autophagy. The protein is Elongation factor Tu, mitochondrial of Rattus norvegicus (Rat).